Here is a 97-residue protein sequence, read N- to C-terminus: MQSSTALLFLLLTVTSFTSQVLAHPGSIPTSCCFIMTSKKIPNTLLKSYKRITNNRCTLKAIVFKTRLGKEICADPKKKWVQDATKHLDQKLQTPKP.

Residues 1–23 (MQSSTALLFLLLTVTSFTSQVLA) form the signal peptide. 2 disulfide bridges follow: C32–C57 and C33–C73. An O-linked (GalNAc...) threonine glycan is attached at T94.

Belongs to the intercrine beta (chemokine CC) family. As to expression, expressed constitutively in the thymus. Expression inducible in the lung (type I alveolar epithelial cells), intestine, heart, spleen, kidney.

The protein resides in the secreted. In terms of biological role, in response to the presence of allergens, this protein directly promotes the accumulation of eosinophils (a prominent feature of allergic inflammatory reactions), but not lymphocytes, macrophages or neutrophils. Binds to CCR3. This Mus musculus (Mouse) protein is Eotaxin (Ccl11).